The sequence spans 273 residues: Phosphatidylglycerol--prolipoprotein diacylglyceryl transferase (273 aa).

Helical transmembrane passes span 20-40, 59-79, and 97-117; these read LAVRWYALAYMVSFIIALPIA, FLFYAILGVLLGGRLGYVLFY, and GGMSFHGGALGVILALAYFSW. Residue arginine 142 coordinates a 1,2-diacyl-sn-glycero-3-phospho-(1'-sn-glycerol). A run of 2 helical transmembrane segments spans residues 206 to 226 and 243 to 263; these read FGFLSGLFLFGYACARSFCEF and MGQLLCIPMALAGMGLMVYAM.

The protein belongs to the Lgt family.

It localises to the cell inner membrane. The enzyme catalyses L-cysteinyl-[prolipoprotein] + a 1,2-diacyl-sn-glycero-3-phospho-(1'-sn-glycerol) = an S-1,2-diacyl-sn-glyceryl-L-cysteinyl-[prolipoprotein] + sn-glycerol 1-phosphate + H(+). Its pathway is protein modification; lipoprotein biosynthesis (diacylglyceryl transfer). Catalyzes the transfer of the diacylglyceryl group from phosphatidylglycerol to the sulfhydryl group of the N-terminal cysteine of a prolipoprotein, the first step in the formation of mature lipoproteins. The sequence is that of Phosphatidylglycerol--prolipoprotein diacylglyceryl transferase from Gluconobacter oxydans (strain 621H) (Gluconobacter suboxydans).